A 475-amino-acid chain; its full sequence is Aspartyl/glutamyl-tRNA(Asn/Gln) amidotransferase subunit B (475 aa).

The protein belongs to the GatB/GatE family. GatB subfamily. As to quaternary structure, heterotrimer of A, B and C subunits.

It carries out the reaction L-glutamyl-tRNA(Gln) + L-glutamine + ATP + H2O = L-glutaminyl-tRNA(Gln) + L-glutamate + ADP + phosphate + H(+). It catalyses the reaction L-aspartyl-tRNA(Asn) + L-glutamine + ATP + H2O = L-asparaginyl-tRNA(Asn) + L-glutamate + ADP + phosphate + 2 H(+). Functionally, allows the formation of correctly charged Asn-tRNA(Asn) or Gln-tRNA(Gln) through the transamidation of misacylated Asp-tRNA(Asn) or Glu-tRNA(Gln) in organisms which lack either or both of asparaginyl-tRNA or glutaminyl-tRNA synthetases. The reaction takes place in the presence of glutamine and ATP through an activated phospho-Asp-tRNA(Asn) or phospho-Glu-tRNA(Gln). This is Aspartyl/glutamyl-tRNA(Asn/Gln) amidotransferase subunit B from Chlorobium limicola (strain DSM 245 / NBRC 103803 / 6330).